We begin with the raw amino-acid sequence, 340 residues long: DnaJ homolog subfamily B member 1 (340 aa).

Positions 2-70 (GKDYYQTLGL…REIFDRYGEE (69 aa)) constitute a J domain. Thr-307 bears the Phosphothreonine mark.

In terms of assembly, interacts with DNAJC3. Interacts with HSF1 (via transactivation domain); this interaction results in the inhibition of heat shock- and HSF1-induced transcriptional activity during the attenuation and recovery phase period of the heat shock response. Interacts with BAG3.

It localises to the cytoplasm. It is found in the nucleus. The protein localises to the nucleolus. Interacts with HSP70 and can stimulate its ATPase activity. Stimulates the association between HSC70 and HIP. Negatively regulates heat shock-induced HSF1 transcriptional activity during the attenuation and recovery phase period of the heat shock response. Stimulates ATP hydrolysis and the folding of unfolded proteins mediated by HSPA1A/B (in vitro). This chain is DnaJ homolog subfamily B member 1 (Dnajb1), found in Mus musculus (Mouse).